The following is a 45-amino-acid chain: DNA-directed RNA polymerase subunit Rpo12 (45 aa).

Zn(2+)-binding residues include C8, C23, and C26.

It belongs to the archaeal Rpo12/eukaryotic RPC10 RNA polymerase subunit family. Part of the RNA polymerase complex. Zn(2+) serves as cofactor.

The protein localises to the cytoplasm. The catalysed reaction is RNA(n) + a ribonucleoside 5'-triphosphate = RNA(n+1) + diphosphate. Functionally, DNA-dependent RNA polymerase (RNAP) catalyzes the transcription of DNA into RNA using the four ribonucleoside triphosphates as substrates. This is DNA-directed RNA polymerase subunit Rpo12 from Methanothrix thermoacetophila (strain DSM 6194 / JCM 14653 / NBRC 101360 / PT) (Methanosaeta thermophila).